A 79-amino-acid chain; its full sequence is Conotoxin LiCr173 (79 aa).

The first 20 residues, 1-20, serve as a signal peptide directing secretion; that stretch reads MSGLGTMVLTLLLLVFMVTS. Positions 21 to 46 are excised as a propeptide; sequence HQDGGKKQATQRNAVNIRRRKSITQR. 3 cysteine pairs are disulfide-bonded: Cys52/Cys64, Cys56/Cys73, and Cys63/Cys77. Residue Phe78 is modified to Phenylalanine amide.

Belongs to the conotoxin O3 superfamily. Expressed by the venom duct.

Its subcellular location is the secreted. The sequence is that of Conotoxin LiCr173 from Conus lividus (Livid cone).